A 577-amino-acid chain; its full sequence is Secreted LysM effector Lys4 (577 aa).

The signal sequence occupies residues 1–19 (MRALTAAVLFVAGLTPVLA). Positions 38–85 (AWYTIVKGDGCDTVEKKFKITPEQFFKWNPDVSTDCVKNFWVGNSYCV) constitute a LysM 1 domain. Over residues 96–121 (TSTTVKSSSTTQKTSSTSSKLSSSSK) the composition is skewed to low complexity. Residues 96 to 135 (TSTTVKSSSTTQKTSSTSSKLSSSSKPVNTTTTPYSTRNP) are disordered. Residues 122–135 (PVNTTTTPYSTRNP) show a composition bias toward polar residues. N-linked (GlcNAc...) asparagine glycosylation is found at asparagine 124, asparagine 140, asparagine 216, and asparagine 235. LysM domains lie at 251-298 (NFYQ…YYCV), 328-375 (KWYQ…WYCV), and 408-455 (QYWL…YVCV). Low complexity predominate over residues 464-485 (SGSTTTITGPPTKGSNPPTTTT). The disordered stretch occupies residues 464–490 (SGSTTTITGPPTKGSNPPTTTTSGGGG). The LysM 5 domain occupies 510–558 (FWFRGKDGASLFCADIAKDAGVSLPDFLKWNPGVGSNCESLWADTWYCV).

This sequence belongs to the secreted LysM effector family.

Might have a role in sequestration of chitin oligosaccharides (breakdown products of fungal cell walls that are released during invasion and act as triggers of host immunity) to dampen host defense. The sequence is that of Secreted LysM effector Lys4 from Pochonia chlamydosporia (strain 123) (Metacordyceps chlamydosporia).